We begin with the raw amino-acid sequence, 93 residues long: MRGETPTLKDIVLFDIPTCETPIDLYCYEQLDSSDEDDQAKQDIQRYRILCVCTQCYKSVKLVVQCTEADIRNLQQMLLGTLDIVCPLCARVE.

Positions 1–42 (MRGETPTLKDIVLFDIPTCETPIDLYCYEQLDSSDEDDQAKQ) are E7 terminal domain. The short motif at 25–29 (LYCYE) is the LXCXE motif; interaction with host RB1 and TMEM173/STING element. A zinc finger lies at 53-89 (CTQCYKSVKLVVQCTEADIRNLQQMLLGTLDIVCPLC). The short motif at 71 to 79 (IRNLQQMLL) is the Nuclear export signal element.

It belongs to the papillomaviridae E7 protein family. As to quaternary structure, homodimer. Homooligomer. Interacts with host RB1; this interaction induces dissociation of RB1-E2F1 complex thereby disrupting RB1 activity. Interacts with host EP300; this interaction represses EP300 transcriptional activity. Interacts with protein E2; this interaction inhibits E7 oncogenic activity. Interacts with host TMEM173/STING; this interaction impairs the ability of TMEM173/STING to sense cytosolic DNA and promote the production of type I interferon (IFN-alpha and IFN-beta). Highly phosphorylated.

The protein resides in the host cytoplasm. Its subcellular location is the host nucleus. Plays a role in viral genome replication by driving entry of quiescent cells into the cell cycle. Stimulation of progression from G1 to S phase allows the virus to efficiently use the cellular DNA replicating machinery to achieve viral genome replication. E7 protein has both transforming and trans-activating activities. Induces the disassembly of the E2F1 transcription factor from RB1, with subsequent transcriptional activation of E2F1-regulated S-phase genes. Interferes with host histone deacetylation mediated by HDAC1 and HDAC2, leading to transcription activation. Also plays a role in the inhibition of both antiviral and antiproliferative functions of host interferon alpha. Interaction with host TMEM173/STING impairs the ability of TMEM173/STING to sense cytosolic DNA and promote the production of type I interferon (IFN-alpha and IFN-beta). The chain is Protein E7 from Human papillomavirus 42.